Here is a 388-residue protein sequence, read N- to C-terminus: Pregnancy-associated glycoprotein (388 aa).

A signal peptide spans 1–15; sequence MKWFGVLGLVTLSEC. Residues 74-385 enclose the Peptidase A1 domain; it reads YMGIISVGTP…DRENDRIGLA (312 aa). Aspartate 92 is a catalytic residue. Cystine bridges form between cysteine 105–cysteine 110 and cysteine 266–cysteine 270. Aspartate 275 is an active-site residue. The cysteines at positions 309 and 344 are disulfide-linked. A glycan (N-linked (GlcNAc...) asparagine) is linked at asparagine 356.

Belongs to the peptidase A1 family. In terms of tissue distribution, trophoblast and placental tissue.

The protein localises to the secreted. It localises to the extracellular space. The protein is Pregnancy-associated glycoprotein (PAG) of Equus caballus (Horse).